The chain runs to 1212 residues: MVDVNRFKSMQITLASPTKVRSWSYGEVKKPETINYRTLKPEREGLFDEVIFGPTKDWECACGKYKRIRYKGIVCDRCGVEVTRAKVRRERMGHIELKAPVSHIWYFKGIPSRMGLTLDMSPRALEEVIYFAAYVVIDPKETPLEPKSLLTEREYREKLQEYGHGSFVAKMGAEAIQDLLKQVDLEAEIAELKEELKTATGQKRFKAVRRLDVLDAFYKSGNKPEWMVLNILPVLPPDLRPMVQLDGGRFAASDLNDLYRRVINRNNRLARLLELGAPGIIVQNEKRMLQEAVDALIDNGRRGRPITGPGSRPLKSLSHMLKGKQGRFRQNLLGKRVDFSGRSVIAVGPTLKMYQCGVPRLMAIELFKPFVMREIVAREYAGNVKAAKRMVERGDERIWDILEDVIKEHPVLLNRAPTLHRLGIQAFEPVLIDGKALRLHPLVCEAYNADFDGDQMAIHVPLSEEAQAEARLLLLAAEHILNPKDGKPVVTPSQDMVLGNYYLTMEDEGREGEGMIFKDIDEAVMAYHNGYVHLHSRVGIAVDSMPDKPWKENQLHKILVTTVGKILFNSIIPSEIPYLQETTNENLTDSTPDKYFLEPGQDIQTVIDSLEINAPFKKKHLGNIIAEIFKRLRTTETSAFLDRLKDLGYYYSTLAGLTVGIADIPVIDNKQEIIDAAHHRVEEINKAFRRGLMTEDDRYVAVTTTWREAKDALEKRLIETQDPKNPIVMMMDSGARGNISNFSQLAGMRGLMAAPNGRIMELPILSNFREGLSVLEMFFSTHGARKGMTDTALKTADSGYLTRRLVDVAQDVIIREDDCGTDRGLVIRAITDGKEVTETLEERLFGRYTKKSVKHPETGEVIVGPDTLITEDMAAAIVNAGVEEVTIRSVFTCKTRHGVCRHCYGINLATGDAVEVGEAVGTIAAQSIGEPGTQLTMRTFHTGGVASNTDITQGLPRIQEIFEARNPKGEAVITEVKGTVIEIEEDAATRTKKVFVQGKTGMGEYVVPFTARMKVEVGDEVHRGEALTEGSIQPKRLLEVRDTLSVETYLLAEVQKVYRSQGVEIGDKHVEVMVRQMLRKVRVMDPGDTDLLPGTLMDISDFTDANKDIVISGGVPATSRPVLLGITKASLETNSFLSAASFQETTRVLTDAAIRGKKDHLIGLKENVIIGKIIPAGTGMARYRNIEPLAVNEVEVIENIAVDEAIVESSED.

Residues cysteine 60, cysteine 62, cysteine 75, and cysteine 78 each contribute to the Zn(2+) site. Positions 450, 452, and 454 each coordinate Mg(2+). Cysteine 819, cysteine 893, cysteine 900, and cysteine 903 together coordinate Zn(2+).

It belongs to the RNA polymerase beta' chain family. The RNAP catalytic core consists of 2 alpha, 1 beta, 1 beta' and 1 omega subunit. When a sigma factor is associated with the core the holoenzyme is formed, which can initiate transcription. Mg(2+) is required as a cofactor. Requires Zn(2+) as cofactor.

It catalyses the reaction RNA(n) + a ribonucleoside 5'-triphosphate = RNA(n+1) + diphosphate. In terms of biological role, DNA-dependent RNA polymerase catalyzes the transcription of DNA into RNA using the four ribonucleoside triphosphates as substrates. The chain is DNA-directed RNA polymerase subunit beta' from Streptococcus thermophilus (strain ATCC BAA-491 / LMD-9).